Here is a 192-residue protein sequence, read N- to C-terminus: Ras-like protein RAS2 (192 aa).

15 to 22 (GGGGVGKS) contacts GTP. The short motif at 37 to 45 (YDPTIEDSY) is the Effector region element. GTP-binding positions include 62–66 (DTAGQ) and 121–124 (NKSD). Cys-189 is modified (cysteine methyl ester). Cys-189 is lipidated: S-geranylgeranyl cysteine. Residues 190–192 (IVL) constitute a propeptide, removed in mature form.

It belongs to the small GTPase superfamily. Ras family.

It is found in the cell membrane. It catalyses the reaction GTP + H2O = GDP + phosphate + H(+). Its activity is regulated as follows. Alternates between an inactive form bound to GDP and an active form bound to GTP. Activated by a guanine nucleotide-exchange factor (GEF) and inactivated by a GTPase-activating protein (GAP). In terms of biological role, ras proteins bind GDP/GTP and possess intrinsic GTPase activity. This is Ras-like protein RAS2 (RAS2) from Hydra vulgaris (Hydra).